The primary structure comprises 525 residues: Keratin, type I cytoskeletal 24 (525 aa).

The segment at 1 to 30 is disordered; that stretch reads MSCSSRASSSRAGGSSSARVSAGGSSFSSG. Residues 1–139 form a head region; the sequence is MSCSSRASSS…VGDGGLFSGG (139 aa). Residues 140–175 are coil 1A; sequence EKQTMQNLNDRLANYLDKVRALEEANTDLENKIKEW. Residues 140–456 enclose the IF rod domain; it reads EKQTMQNLND…RLLDGEGGGS (317 aa). Residues 176–198 form a linker 1 region; that stretch reads YDKYGPGSGDGGSGRDYSKYYSI. The segment at 199–290 is coil 1B; the sequence is IEDLRNQIIA…KNHEEEMKNM (92 aa). Residues 291 to 313 are linker 12; sequence QGSSGGEVTVEMNAAPGTDLTKL. A coil 2 region spans residues 314 to 452; that stretch reads LNDMRAQYEE…ETYRRLLDGE (139 aa). The tract at residues 453-525 is tail; sequence GGGSSFAEFG…VSSISEVKVK (73 aa). The tract at residues 459-497 is disordered; the sequence is AEFGGRNSGSVNMGSRDLVSGDSRSGSCSGQGRDSSKTR. A compositionally biased stretch (polar residues) spans 480–491; it reads DSRSGSCSGQGR.

The protein belongs to the intermediate filament family. Heterotetramer of two type I and two type II keratins. In terms of tissue distribution, highly expressed in keratinocytes, placenta, colon and spleen. Expressed at lower level in thymus and testis.

This is Keratin, type I cytoskeletal 24 (KRT24) from Homo sapiens (Human).